The sequence spans 1955 residues: Rootletin (1955 aa).

5 coiled-coil regions span residues 29–58, 162–223, 284–1303, 1368–1579, and 1607–1863; these read EENR…ESIE, EENL…QQHT, LMRK…AVES, VGVT…EELR, and RRWE…RTKG. Disordered stretches follow at residues 321 to 341, 391 to 451, 504 to 551, 907 to 935, and 961 to 998; these read VTEN…DLKR, LTTK…KKLD, LKER…RSLK, EKLN…NEAV, and RDLE…QKTL. Composition is skewed to basic and acidic residues over residues 326–341 and 396–451; these read MKSE…DLKR and GEID…KKLD. Basic and acidic residues-rich tracts occupy residues 907–931, 961–982, and 989–998; these read EKLN…ESSK, RDLE…KMEL, and EDRKKEQKTL.

The protein belongs to the rootletin family. Expressed in head ciliated neurons.

The protein resides in the cytoplasm. Its subcellular location is the cytoskeleton. It is found in the cilium basal body. The protein localises to the cilium axoneme. Major structural component of the ciliary rootlet, a cytoskeletal-like structure in ciliated cells which originates from the basal body at the proximal end of a cilium and extends proximally toward the cell nucleus. Required for cilia integrity and function in sensory neurons. Maintains cilia integrity, partly by modulating the assembly and transport of intraflagellar proteins along the ciliary axoneme. Required for normal mating behavior and normal responses to environmental and chemical stimuli. The polypeptide is Rootletin (Caenorhabditis elegans).